Consider the following 1015-residue polypeptide: Protein HIRA (1015 aa).

2 WD repeats span residues H11–D53 and N68–T107. S111 carries the post-translational modification Phosphoserine. WD repeat units follow at residues S129–A168, G172–S211, G220–D263, G266–V322, and L326–S367. The segment at Q408–G431 is disordered. Positions L413–G431 are enriched in polar residues. The interval R421–F479 is interaction with ASF1A. The segment at R421–E727 is interaction with CCNA1. The tract at residues E439 to S475 is required for repression of histone gene transcription. Low complexity-rich tracts occupy residues S494–S507 and A540–S556. Residues S494–I558 are disordered. S548 carries the phosphoserine modification. The residue at position 554 (T554) is a Phosphothreonine. Position 556 is a phosphoserine (S556). T575 is subject to Phosphothreonine. Phosphoserine is present on residues S583, S608, S609, S610, S612, S659, and S673. Interaction with PAX3 regions lie at residues K593–L737 and T738–L826. An interaction with histone H2B region spans residues E594–Q824. Residues S603 to H617 are compositionally biased toward basic and acidic residues. Positions S603–S623 are disordered. Residues V736–K1015 are interaction with histone H4.

Belongs to the WD repeat HIR1 family. Interacts with CCNA1, HIRIP3 and NFU1/HIRIP5. Part of a complex which includes ASF1A, CABIN1, histone H3.3, histone H4 and UBN1. Interacts with histone H2B, histone H3-3B, PAX3 and PAX7. Sumoylated. In terms of processing, phosphorylated by CDK2/CCNA1 and CDK2/CCNE1 on Thr-554 in vitro. Also phosphorylated on Thr-554 in vivo. Expressed in cerebrum, cerebellum, heart, kidney, liver, lung and spleen.

It localises to the nucleus. Its subcellular location is the PML body. In terms of biological role, required for the periodic repression of histone gene transcription during the cell cycle. Cooperates with ASF1A to promote replication-independent chromatin assembly. Required for the formation of senescence-associated heterochromatin foci (SAHF) and efficient senescence-associated cell cycle exit. In Mus musculus (Mouse), this protein is Protein HIRA (Hira).